The primary structure comprises 316 residues: Dehydrogenase/reductase SDR family protein 7-like (316 aa).

Over 1–18 (MFFYKIIYFIGFPYIVLR) the chain is Cytoplasmic. Residues 19–39 (LIVSIILPIASLYFIYCNFIA) form a helical; Signal-anchor for type II membrane protein membrane-spanning segment. Residues 40–316 (PKLREKPESS…HKFASSSVKK (277 aa)) are Peroxisomal-facing. 56–80 (IITGASSGIGAELAKKYARLGCKVT) provides a ligand contact to NAD(+). Position 194 (S194) interacts with substrate. The Proton acceptor role is filled by Y207.

The protein belongs to the short-chain dehydrogenases/reductases (SDR) family.

Its subcellular location is the peroxisome membrane. Functionally, putative oxidoreductase. This chain is Dehydrogenase/reductase SDR family protein 7-like, found in Dictyostelium discoideum (Social amoeba).